Reading from the N-terminus, the 3354-residue chain is Cadherin-23 (3354 aa).

The signal sequence occupies residues 1-23 (MRYSLVTCYAVLWLLMLVPGSWG). Residues 24–3064 (QVNRLPFFTN…SVQLPDDMSA (3041 aa)) are Extracellular-facing. 27 Cadherin domains span residues 34–132 (HFFD…APTF), 133–236 (HNQP…DPIF), 237–348 (INLP…APEF), 349–460 (NSSE…RPIF), 461–561 (SQPL…VPTF), 562–671 (QKDA…PPTF), 672–784 (SKPA…APYY), 779–890 (KDAP…DPTF), 891–995 (RNLP…TPTF), 996–1102 (FPAV…RPIF), 1103–1208 (LQSS…APVF), 1210–1313 (QQQY…AVQF), 1314–1418 (SNAS…SPRF), 1420–1527 (FTSD…PPVI), 1529–1634 (SPFG…APVF), 1635–1744 (QQPH…VPTF), 1745–1851 (PRDY…DPVL), 1852–1959 (LNLP…HPLF), 1960–2069 (TEGT…WPTF), 2070–2174 (SPPT…RPEF), 2175–2293 (LNPI…TPQF), 2297–2402 (GITY…NPIF), 2403–2509 (DQPS…RPQF), 2510–2611 (SKPQ…RPVF), 2614–2722 (PPNG…EPLF), 2729–2846 (SPQY…PPRF), and 2847–2975 (TKAE…EEEF). Residues N155 and N206 are each glycosylated (N-linked (GlcNAc...) asparagine). N349, N393, N434, N466, N472, N602, N694, N765, N810, N827, N941, N1001, N1018, N1171, N1282, N1315, N1473, N1534, N1651, N1667, N1818, N1857, N1889, N1902, N2014, N2050, N2129, N2168, N2195, N2263, N2357, and N2369 each carry an N-linked (GlcNAc...) asparagine glycan. N-linked (GlcNAc...) asparagine glycans are attached at residues N2578, N2616, N2749, N2808, N2877, N2896, N2941, and N2981. The helical transmembrane segment at 3065-3085 (LQMAIIVLAILLFLAAMLFVL) threads the bilayer. The Cytoplasmic portion of the chain corresponds to 3086–3354 (MNWYYRTIHK…MESPLEITEL (269 aa)).

As to quaternary structure, interacts with USH1C and USH1G. antiparallel heterodimer with PCDH15. Isoform C1: Interacts with CAMSAP3; leading to inhibit CAMSAP3 ability to induce microtubule bundle formation. In terms of tissue distribution, in adult animals relatively high levels of expression are found in testis, skeletal muscle, heart, eye and thymus, and lower expression in kidney, lung and brain. Found in the sensory hair cells of the inner ear.

Its subcellular location is the cell membrane. Cadherins are calcium-dependent cell adhesion proteins. They preferentially interact with themselves in a homophilic manner in connecting cells. CDH23 is required for establishing and/or maintaining the proper organization of the stereocilia bundle of hair cells in the cochlea and the vestibule during late embryonic/early postnatal development. It is part of the functional network formed by USH1C, USH1G, CDH23 and MYO7A that mediates mechanotransduction in cochlear hair cells. Required for normal hearing. This Mus musculus (Mouse) protein is Cadherin-23 (Cdh23).